Here is a 459-residue protein sequence, read N- to C-terminus: Glycosyl hydrolase family 109 protein (459 aa).

The segment at residues 1–31 is a signal peptide (tat-type signal); the sequence is MHNIHRRNFLKAAGAATAGLVTANIALNAYA. NAD(+)-binding positions include 64–65, aspartate 86, 135–138, 155–156, and asparagine 184; these read ER, WEWH, and EV. Substrate-binding positions include tyrosine 213, arginine 232, 244–247, and tyrosine 326; that span reads YPTH. Tyrosine 244 serves as a coordination point for NAD(+).

This sequence belongs to the Gfo/Idh/MocA family. Glycosyl hydrolase 109 subfamily. NAD(+) serves as cofactor. In terms of processing, predicted to be exported by the Tat system. The position of the signal peptide cleavage has not been experimentally proven.

Functionally, glycosidase. The protein is Glycosyl hydrolase family 109 protein of Shewanella baltica (strain OS155 / ATCC BAA-1091).